The primary structure comprises 99 residues: MGRFVVWPCELDSRLSRKYGRIIPKNLAIEKPSLDEIIEVAETLNLKIVEVDREKLNPRLSGIDEELRTYGRIIIESPYGKVKTLRLIAQKIREFRRRR.

Belongs to the SRP19 family. In terms of assembly, part of the signal recognition particle protein translocation system, which is composed of SRP and FtsY. Archaeal SRP consists of a 7S RNA molecule of 300 nucleotides and two protein subunits: SRP54 and SRP19.

The protein resides in the cytoplasm. Functionally, involved in targeting and insertion of nascent membrane proteins into the cytoplasmic membrane. Binds directly to 7S RNA and mediates binding of the 54 kDa subunit of the SRP. This is Signal recognition particle 19 kDa protein from Pyrococcus horikoshii (strain ATCC 700860 / DSM 12428 / JCM 9974 / NBRC 100139 / OT-3).